Consider the following 606-residue polypeptide: Protein spire homolog 2 (606 aa).

One can recognise a KIND domain in the interval 21–219 (LSLEEVLKSY…RALFLETLEL (199 aa)). A disordered region spans residues 147–181 (KHCGSNAAKDEGYSGQDEEEEEEEEEEEEGAGRGI). Residues 162-175 (QDEEEEEEEEEEEE) are compositionally biased toward acidic residues. WH2 domains lie at 263–277 (QLMK…LKKV) and 357–374 (LHDR…LRPV). Disordered stretches follow at residues 438–464 (DEDS…RSFS) and 517–537 (CRSL…ASHG). Over residues 445 to 464 (VDMRRVESSPTPLKRDRSFS) the composition is skewed to basic and acidic residues. Positions 554–574 (LALTVDGVINVRRILVKAEME) are spir-box.

This sequence belongs to the spire family.

Its subcellular location is the cytoplasm. It localises to the cytoskeleton. The protein localises to the cytosol. The protein resides in the cell membrane. It is found in the cytoplasmic vesicle membrane. In terms of biological role, acts as an actin nucleation factor, remains associated with the slow-growing pointed end of the new filament. Involved in intracellular vesicle transport along actin fibers, providing a novel link between actin cytoskeleton dynamics and intracellular transport. Required for asymmetric spindle positioning and asymmetric cell division during oocyte meiosis. Required for normal formation of the cleavage furrow and for polar body extrusion during female germ cell meiosis. Also acts in the nucleus: together with SPIRE1 and SPIRE2, promotes assembly of nuclear actin filaments in response to DNA damage in order to facilitate movement of chromatin and repair factors after DNA damage. The sequence is that of Protein spire homolog 2 (spire2) from Danio rerio (Zebrafish).